The primary structure comprises 51 residues: Sperm protamine P1 (51 aa).

A compositionally biased stretch (low complexity) spans 1 to 13 (MARYRCCRSQSRS). Positions 1-30 (MARYRCCRSQSRSRYYRQRQRSRRRRRRSC) are disordered. Residues 14–30 (RYYRQRQRSRRRRRRSC) are compositionally biased toward basic residues. Cysteines 40 and 48 form a disulfide.

It belongs to the protamine P1 family. Cross-linked by interchain disulfide bonds around the DNA-helix. Post-translationally, phosphorylated by SRPK1. Testis.

The protein localises to the nucleus. It localises to the chromosome. Protamines substitute for histones in the chromatin of sperm during the haploid phase of spermatogenesis. They compact sperm DNA into a highly condensed, stable and inactive complex. This Homo sapiens (Human) protein is Sperm protamine P1 (PRM1).